Here is a 305-residue protein sequence, read N- to C-terminus: Probable lipid kinase YegS-like (305 aa).

The DAGKc domain occupies 2–134; sequence HPPAPALLII…DLAKVNDQRY (133 aa). Residues threonine 40, 66 to 72, and threonine 95 contribute to the ATP site; that span reads GDGTINE. Mg(2+)-binding residues include leucine 215, aspartate 218, and leucine 220. The active-site Proton acceptor is glutamate 271.

Belongs to the diacylglycerol/lipid kinase family. YegS lipid kinase subfamily. Requires Mg(2+) as cofactor. It depends on Ca(2+) as a cofactor.

The protein resides in the cytoplasm. Functionally, probably phosphorylates lipids; the in vivo substrate is unknown. The sequence is that of Probable lipid kinase YegS-like from Serratia proteamaculans (strain 568).